Reading from the N-terminus, the 109-residue chain is Thioredoxin 2 (109 aa).

The 108-residue stretch at 2 to 109 (SGKYFEATDQ…IAKKLDEHIG (108 aa)) folds into the Thioredoxin domain. Cysteines 33 and 36 form a disulfide.

This sequence belongs to the thioredoxin family.

Its function is as follows. Participates in various redox reactions through the reversible oxidation of its active center dithiol to a disulfide and catalyzes dithiol-disulfide exchange reactions. The protein is Thioredoxin 2 (trx2) of Chlorobaculum tepidum (strain ATCC 49652 / DSM 12025 / NBRC 103806 / TLS) (Chlorobium tepidum).